Here is a 79-residue protein sequence, read N- to C-terminus: CATR tumorigenic conversion 1 protein (79 aa).

This chain is CATR tumorigenic conversion 1 protein (CATR1), found in Homo sapiens (Human).